A 222-amino-acid chain; its full sequence is Twisted gastrulation protein homolog 1 (222 aa).

The N-terminal stretch at 1 to 24 is a signal peptide; that stretch reads MKSHYIVLALASLTFLLCLPVSQS. 2 N-linked (GlcNAc...) asparagine glycosylation sites follow: asparagine 80 and asparagine 146.

This sequence belongs to the twisted gastrulation protein family. As to quaternary structure, interacts with CHRD and/or BMP4. This interaction enhances CHRD/BMP4 complex formation. Interacts with BMP7. Expressed in lymph node, liver, kidney, and lung. Expression in the kidney was stronger in the medulla than in the cortex, particularly in the cells surrounding the medullary tubules. Expressed in growth plate cartilage of long bones, ribs, and digits and to a lesser extent also in the resting zone of the epiphysis, trabecular bone, and vertebral cartilage. Expression seems to be absent from other skeletal tissues including muscle, skin, and fibroblasts.

Its subcellular location is the secreted. Functionally, may be involved in dorsoventral axis formation. Seems to antagonize BMP signaling by forming ternary complexes with CHRD and BMPs, thereby preventing BMPs from binding to their receptors. In addition to the anti-BMP function, also has pro-BMP activity, partly mediated by cleavage and degradation of CHRD, which releases BMPs from ternary complexes. May be an important modulator of BMP-regulated cartilage development and chondrocyte differentiation. May play a role in thymocyte development. The protein is Twisted gastrulation protein homolog 1 (Twsg1) of Mus musculus (Mouse).